A 48-amino-acid polypeptide reads, in one-letter code: Large ribosomal subunit protein bL33A (48 aa).

The protein belongs to the bacterial ribosomal protein bL33 family.

The protein is Large ribosomal subunit protein bL33A of Streptococcus pyogenes serotype M28 (strain MGAS6180).